A 150-amino-acid chain; its full sequence is D-aminoacyl-tRNA deacylase (150 aa).

The Gly-cisPro motif, important for rejection of L-amino acids motif lies at 138 to 139 (GP).

It belongs to the DTD family. In terms of assembly, homodimer.

Its subcellular location is the cytoplasm. The enzyme catalyses glycyl-tRNA(Ala) + H2O = tRNA(Ala) + glycine + H(+). It carries out the reaction a D-aminoacyl-tRNA + H2O = a tRNA + a D-alpha-amino acid + H(+). Functionally, an aminoacyl-tRNA editing enzyme that deacylates mischarged D-aminoacyl-tRNAs. Also deacylates mischarged glycyl-tRNA(Ala), protecting cells against glycine mischarging by AlaRS. Acts via tRNA-based rather than protein-based catalysis; rejects L-amino acids rather than detecting D-amino acids in the active site. By recycling D-aminoacyl-tRNA to D-amino acids and free tRNA molecules, this enzyme counteracts the toxicity associated with the formation of D-aminoacyl-tRNA entities in vivo and helps enforce protein L-homochirality. This Dechloromonas aromatica (strain RCB) protein is D-aminoacyl-tRNA deacylase.